Here is a 449-residue protein sequence, read N- to C-terminus: SWI/SNF chromatin-remodeling accessory subunit 2 (449 aa).

The segment covering 1-11 (MHSQQRPNPQM) has biased composition (polar residues). The tract at residues 1–56 (MHSQQRPNPQMNRHPYGTPGSAPQMRRPGGFAGQPPQMHGPRMVAPPAAPLPKKKK) is disordered. An SWIB/MDM2 domain is found at 223-300 (NHPAKFKLHP…PNKLHQLLQQ (78 aa)).

It belongs to the SMARCD family. In terms of assembly, component of the multiprotein chromatin-remodeling complexes SWI/SNF: SWI/SNF-A (BAF), SWI/SNF-B (PBAF) and related complexes. The canonical complex contains a catalytic subunit swsn-4, core subunits swsn-1 and swsn-5, and accessory subunits swsn-3, swsn-6, phf-10, dpff-1, swsn-9 and either ham-3/swsn-2.1 or swsn-2.2.

Its subcellular location is the nucleus. The protein resides in the nucleoplasm. The protein localises to the chromosome. It is found in the nucleus envelope. In terms of biological role, involved in transcriptional activation and repression of select genes by chromatin remodeling (alteration of DNA-nucleosome topology). Component of SWI/SNF chromatin remodeling complexes that carry out key enzymatic activities, changing chromatin structure by altering DNA-histone contacts within a nucleosome in an ATP-dependent manner. Probably regulates vulva development through the let-60/Ras pathway. Involved in nuclear reassembly after mitosis and recruitment of nuclear envelope protein, mel-28, to the nuclear periphery in the early embryo and in the adult germline. Involved in gonadogenesis. This is SWI/SNF chromatin-remodeling accessory subunit 2 from Caenorhabditis elegans.